Consider the following 159-residue polypeptide: Putative 4-hydroxy-4-methyl-2-oxoglutarate aldolase (159 aa).

Residues 75 to 78 (GDQL) and R97 each bind substrate. D98 lines the a divalent metal cation pocket.

This sequence belongs to the class II aldolase/RraA-like family. As to quaternary structure, homotrimer. The cofactor is a divalent metal cation.

It carries out the reaction 4-hydroxy-4-methyl-2-oxoglutarate = 2 pyruvate. It catalyses the reaction oxaloacetate + H(+) = pyruvate + CO2. Its function is as follows. Catalyzes the aldol cleavage of 4-hydroxy-4-methyl-2-oxoglutarate (HMG) into 2 molecules of pyruvate. Also contains a secondary oxaloacetate (OAA) decarboxylase activity due to the common pyruvate enolate transition state formed following C-C bond cleavage in the retro-aldol and decarboxylation reactions. The polypeptide is Putative 4-hydroxy-4-methyl-2-oxoglutarate aldolase (Laribacter hongkongensis (strain HLHK9)).